Reading from the N-terminus, the 145-residue chain is uncharacterized protein (145 aa).

Residues 1–25 (MSENNENDGFNLDPDVKEELEETKS) form a disordered region. Residues 14–25 (PDVKEELEETKS) are compositionally biased toward basic and acidic residues.

This is an uncharacterized protein from His1 virus (isolate Australia/Victoria) (His1V).